The following is a 209-amino-acid chain: ATP synthase subunit O, mitochondrial (209 aa).

The protein belongs to the ATPase delta chain family. As to quaternary structure, F-type ATPases have 2 components, CF(1) - the catalytic core - and CF(0) - the membrane proton channel. CF(1) has five subunits: alpha(3), beta(3), gamma(1), delta(1), epsilon(1). CF(0) has three main subunits: a, b and c.

It is found in the mitochondrion. It localises to the mitochondrion inner membrane. Mitochondrial membrane ATP synthase (F(1)F(0) ATP synthase or Complex V) produces ATP from ADP in the presence of a proton gradient across the membrane which is generated by electron transport complexes of the respiratory chain. F-type ATPases consist of two structural domains, F(1) - containing the extramembraneous catalytic core and F(0) - containing the membrane proton channel, linked together by a central stalk and a peripheral stalk. During catalysis, ATP synthesis in the catalytic domain of F(1) is coupled via a rotary mechanism of the central stalk subunits to proton translocation. Part of the complex F(0) domain and the peripheric stalk, which acts as a stator to hold the catalytic alpha(3)beta(3) subcomplex and subunit a/ATP6 static relative to the rotary elements. The protein is ATP synthase subunit O, mitochondrial of Drosophila melanogaster (Fruit fly).